Consider the following 432-residue polypeptide: Glutamyl-tRNA reductase (432 aa).

Substrate-binding positions include 49–52, Ser101, 106–108, and Gln112; these read TCNR and ESQ. The active-site Nucleophile is the Cys50. 181 to 186 provides a ligand contact to NADP(+); that stretch reads GTGETI. A disordered region spans residues 410 to 432; that stretch reads KPGYHHPTLQTTIVKTDETDPAS.

This sequence belongs to the glutamyl-tRNA reductase family. As to quaternary structure, homodimer.

The enzyme catalyses (S)-4-amino-5-oxopentanoate + tRNA(Glu) + NADP(+) = L-glutamyl-tRNA(Glu) + NADPH + H(+). It participates in porphyrin-containing compound metabolism; protoporphyrin-IX biosynthesis; 5-aminolevulinate from L-glutamyl-tRNA(Glu): step 1/2. In terms of biological role, catalyzes the NADPH-dependent reduction of glutamyl-tRNA(Glu) to glutamate 1-semialdehyde (GSA). The sequence is that of Glutamyl-tRNA reductase from Xylella fastidiosa (strain 9a5c).